A 90-amino-acid chain; its full sequence is uncharacterized protein (90 aa).

A signal peptide spans 1-26; sequence MFESEAELRRIRIALVWIAVFLLFGA.

This is an uncharacterized protein from Bacillus subtilis (strain 168).